A 445-amino-acid chain; its full sequence is Glycine--tRNA ligase (445 aa).

Substrate-binding residues include arginine 97 and glutamate 145. ATP is bound by residues 177 to 179 (RNE), 187 to 192 (FRTCEF), 262 to 263 (EV), and 308 to 311 (GLTR). 192–196 (FEQME) provides a ligand contact to substrate. Position 304-308 (304-308 (ETSAG)) interacts with substrate.

The protein belongs to the class-II aminoacyl-tRNA synthetase family. Homodimer.

It localises to the cytoplasm. It catalyses the reaction tRNA(Gly) + glycine + ATP = glycyl-tRNA(Gly) + AMP + diphosphate. Its function is as follows. Catalyzes the attachment of glycine to tRNA(Gly). This is Glycine--tRNA ligase from Borrelia garinii subsp. bavariensis (strain ATCC BAA-2496 / DSM 23469 / PBi) (Borreliella bavariensis).